The chain runs to 96 residues: MEKNKHCFYVVECSDGSYYAGYTNHIEKRIETHNSGKGAKYTRARLPVALKYVEFHEDKRTAMQAEYYFKQLNRKQKEEYMQKGEPYVATKKFSTK.

Residues asparagine 4–glutamate 79 enclose the GIY-YIG domain.

This sequence belongs to the UPF0213 family.

This Bacillus cereus (strain ATCC 10987 / NRS 248) protein is UPF0213 protein BCE_0033.